We begin with the raw amino-acid sequence, 87 residues long: Large ribosomal subunit protein bL27 (87 aa).

Residues 1-22 (MAHKKAGGSSRNGRDSQGQRRG) form a disordered region.

The protein belongs to the bacterial ribosomal protein bL27 family.

This is Large ribosomal subunit protein bL27 from Nitratidesulfovibrio vulgaris (strain DP4) (Desulfovibrio vulgaris).